A 159-amino-acid polypeptide reads, in one-letter code: UPF0260 protein Avi_1324 (159 aa).

Belongs to the UPF0260 family.

This Allorhizobium ampelinum (strain ATCC BAA-846 / DSM 112012 / S4) (Agrobacterium vitis (strain S4)) protein is UPF0260 protein Avi_1324.